The primary structure comprises 433 residues: Histidinol dehydrogenase 2 (433 aa).

Y130, Q192, and N215 together coordinate NAD(+). Positions 238, 260, and 263 each coordinate substrate. Zn(2+)-binding residues include Q260 and H263. Residues E328 and H329 each act as proton acceptor in the active site. Substrate-binding residues include H329, D362, E416, and H421. D362 serves as a coordination point for Zn(2+). A Zn(2+)-binding site is contributed by H421.

It belongs to the histidinol dehydrogenase family. The cofactor is Zn(2+).

It carries out the reaction L-histidinol + 2 NAD(+) + H2O = L-histidine + 2 NADH + 3 H(+). Its pathway is amino-acid biosynthesis; L-histidine biosynthesis; L-histidine from 5-phospho-alpha-D-ribose 1-diphosphate: step 9/9. Catalyzes the sequential NAD-dependent oxidations of L-histidinol to L-histidinaldehyde and then to L-histidine. The protein is Histidinol dehydrogenase 2 of Trichormus variabilis (strain ATCC 29413 / PCC 7937) (Anabaena variabilis).